The following is a 105-amino-acid chain: uncharacterized protein (105 aa).

This is an uncharacterized protein from Fowlpox virus (strain NVSL) (FPV).